The chain runs to 487 residues: Transcription factor GTE5, chloroplastic (487 aa).

A chloroplast-targeting transit peptide spans 1 to 32 (MSSEHISGGGASKTKKHKWSSSQNRPKPMGVS). 3 disordered regions span residues 1–48 (MSSE…NSFA), 93–127 (ANPG…GADK), and 400–487 (KNEA…DNGN). The region spanning 127–233 (KGTVQIFKNC…NMFEDKWVSI (107 aa)) is the Bromo domain. In terms of domain architecture, NET spans 320 to 401 (EEEAPVNNRD…GYKESLSKKN (82 aa)). Basic and acidic residues predominate over residues 400 to 414 (KNEAHGFGSERDAES). Residues 415 to 435 (VHNSIQEPTTLVSGTTTSRVT) are compositionally biased toward polar residues. Over residues 451–487 (NNASGSSSSNSSSSDSGSCSSDTDSDSSSGRGSDNGN) the composition is skewed to low complexity.

In terms of assembly, interacts with SIZ1 (via PHD domain). Post-translationally, sumoylated by SIZ1.

The protein localises to the plastid. Its subcellular location is the chloroplast. This chain is Transcription factor GTE5, chloroplastic (GTE5), found in Arabidopsis thaliana (Mouse-ear cress).